We begin with the raw amino-acid sequence, 810 residues long: Sister chromatid cohesion 1 protein 2 (810 aa).

Disordered stretches follow at residues 200-244 (RDTT…LLEP), 273-315 (SHES…SECG), and 606-626 (MGAS…AETP). 2 stretches are compositionally biased toward basic and acidic residues: residues 220–234 (EPSR…HRED) and 273–310 (SHES…DRSL). The segment covering 606-622 (MGASSTTSGTAHQTENA) has biased composition (polar residues).

It belongs to the rad21 family. In terms of assembly, component of the cohesin complex. In terms of tissue distribution, low expression in shoots, buds, siliques, leaves and roots. Found in, but not limited to, actively dividing cells: in procambium, protoderm and ground meristem in roots, and in shoot and floral meristems.

It localises to the nucleus. Its function is as follows. May be involved in sister chromatid cohesion during mitosis. This Arabidopsis thaliana (Mouse-ear cress) protein is Sister chromatid cohesion 1 protein 2 (SYN2).